A 779-amino-acid polypeptide reads, in one-letter code: Endonuclease MutS2 (779 aa).

Position 328 to 335 (328 to 335) interacts with ATP; sequence GPNTGGKT. Residues 704 to 779 form the Smr domain; the sequence is LDLRGKRYEE…GSGATIVTLG (76 aa).

It belongs to the DNA mismatch repair MutS family. MutS2 subfamily. As to quaternary structure, homodimer. Binds to stalled ribosomes, contacting rRNA.

Functionally, endonuclease that is involved in the suppression of homologous recombination and thus may have a key role in the control of bacterial genetic diversity. In terms of biological role, acts as a ribosome collision sensor, splitting the ribosome into its 2 subunits. Detects stalled/collided 70S ribosomes which it binds and splits by an ATP-hydrolysis driven conformational change. Acts upstream of the ribosome quality control system (RQC), a ribosome-associated complex that mediates the extraction of incompletely synthesized nascent chains from stalled ribosomes and their subsequent degradation. Probably generates substrates for RQC. This chain is Endonuclease MutS2, found in Streptococcus agalactiae serotype Ia (strain ATCC 27591 / A909 / CDC SS700).